The following is a 550-amino-acid chain: ATP synthase subunit alpha (550 aa).

172–179 (GDRKTGKT) is an ATP binding site. Positions 514–550 (EDEQRVNEPPAKPLAGEENRETVTRFRDGTTDRPAES) are disordered. The segment covering 528-550 (AGEENRETVTRFRDGTTDRPAES) has biased composition (basic and acidic residues).

It belongs to the ATPase alpha/beta chains family. In terms of assembly, F-type ATPases have 2 components, CF(1) - the catalytic core - and CF(0) - the membrane proton channel. CF(1) has five subunits: alpha(3), beta(3), gamma(1), delta(1), epsilon(1). CF(0) has three main subunits: a(1), b(2) and c(9-12). The alpha and beta chains form an alternating ring which encloses part of the gamma chain. CF(1) is attached to CF(0) by a central stalk formed by the gamma and epsilon chains, while a peripheral stalk is formed by the delta and b chains.

It localises to the cell membrane. The catalysed reaction is ATP + H2O + 4 H(+)(in) = ADP + phosphate + 5 H(+)(out). Functionally, produces ATP from ADP in the presence of a proton gradient across the membrane. The alpha chain is a regulatory subunit. This is ATP synthase subunit alpha from Salinispora arenicola (strain CNS-205).